Here is a 341-residue protein sequence, read N- to C-terminus: Dehydration-responsive element-binding protein 2C (341 aa).

Residues 8-48 carry the Nuclear localization signal motif; the sequence is RKRKSRGTRDVAEILRQWREYNEQIEAESCIDGGGPKSIRK. The interval 36-63 is disordered; that stretch reads SCIDGGGPKSIRKPPPKGSRKGCMKGKG. Positions 45–59 are enriched in basic residues; sequence SIRKPPPKGSRKGCM. The AP2/ERF DNA-binding region spans 71–128; it reads DYRGVRQRRWGKWVAEIREPDGGARLWLGTFSSSYEAALAYDEAAKAIYGQSARLNLP.

This sequence belongs to the AP2/ERF transcription factor family. ERF subfamily.

The protein resides in the nucleus. Its function is as follows. Transcriptional activator that binds specifically to the DNA sequence 5'-[AG]CCGAC-3'. Binding to the C-repeat/DRE element mediates high salinity- and abscisic acid-inducible transcription. This is Dehydration-responsive element-binding protein 2C (DREB2C) from Arabidopsis thaliana (Mouse-ear cress).